The chain runs to 433 residues: Ribosomal RNA small subunit methyltransferase B (433 aa).

S-adenosyl-L-methionine is bound by residues 254 to 260 (CAAPGGK), aspartate 277, aspartate 303, and aspartate 322. Residue cysteine 375 is the Nucleophile of the active site.

It belongs to the class I-like SAM-binding methyltransferase superfamily. RsmB/NOP family.

The protein localises to the cytoplasm. The catalysed reaction is cytidine(967) in 16S rRNA + S-adenosyl-L-methionine = 5-methylcytidine(967) in 16S rRNA + S-adenosyl-L-homocysteine + H(+). Functionally, specifically methylates the cytosine at position 967 (m5C967) of 16S rRNA. This chain is Ribosomal RNA small subunit methyltransferase B, found in Sodalis glossinidius (strain morsitans).